The sequence spans 380 residues: 1-deoxy-D-xylulose 5-phosphate reductoisomerase 2 (380 aa).

Residues Ser-10, Gly-11, Ser-12, Ile-13, Gly-36, Lys-37, Asn-38, and Asn-120 each coordinate NADPH. Residue Lys-121 coordinates 1-deoxy-D-xylulose 5-phosphate. Residue Glu-122 coordinates NADPH. Asp-146 is a binding site for Mn(2+). 1-deoxy-D-xylulose 5-phosphate contacts are provided by Ser-147, Glu-148, Ser-172, and His-195. Glu-148 serves as a coordination point for Mn(2+). Gly-201 contributes to the NADPH binding site. 4 residues coordinate 1-deoxy-D-xylulose 5-phosphate: Ser-208, Asn-213, Lys-214, and Glu-217. Glu-217 provides a ligand contact to Mn(2+).

The protein belongs to the DXR family. Mg(2+) serves as cofactor. Requires Mn(2+) as cofactor.

It carries out the reaction 2-C-methyl-D-erythritol 4-phosphate + NADP(+) = 1-deoxy-D-xylulose 5-phosphate + NADPH + H(+). It participates in isoprenoid biosynthesis; isopentenyl diphosphate biosynthesis via DXP pathway; isopentenyl diphosphate from 1-deoxy-D-xylulose 5-phosphate: step 1/6. Catalyzes the NADPH-dependent rearrangement and reduction of 1-deoxy-D-xylulose-5-phosphate (DXP) to 2-C-methyl-D-erythritol 4-phosphate (MEP). The sequence is that of 1-deoxy-D-xylulose 5-phosphate reductoisomerase 2 from Bacillus thuringiensis subsp. konkukian (strain 97-27).